The primary structure comprises 268 residues: Cyclohexadienyl dehydratase (268 aa).

The signal sequence occupies residues 1 to 25 (MPKSFRHLVQALACLALLASASLQA).

Belongs to the bacterial solute-binding protein 3 family. As to quaternary structure, homodimer.

It localises to the periplasm. The enzyme catalyses prephenate + H(+) = 3-phenylpyruvate + CO2 + H2O. It carries out the reaction L-arogenate + H(+) = L-phenylalanine + CO2 + H2O. The protein operates within amino-acid biosynthesis; L-phenylalanine biosynthesis; L-phenylalanine from L-arogenate: step 1/1. It functions in the pathway amino-acid biosynthesis; L-phenylalanine biosynthesis; phenylpyruvate from prephenate: step 1/1. Forms alternative pathway for phenylalanine biosynthesis. Can catalyze two reactions: prephenate dehydratase and arogenate dehydratase. May have a role in chemotaxis or transport. The chain is Cyclohexadienyl dehydratase (pheC) from Pseudomonas aeruginosa (strain ATCC 15692 / DSM 22644 / CIP 104116 / JCM 14847 / LMG 12228 / 1C / PRS 101 / PAO1).